The sequence spans 154 residues: Ascorbate-specific PTS system EIIA component (154 aa).

A PTS EIIA type-2 domain is found at 6 to 150 (SLAVNKSIRL…QEVLDLIDRT (145 aa)). Residue His68 is the Tele-phosphohistidine intermediate of the active site. Position 68 is a phosphohistidine (His68).

The protein resides in the cytoplasm. The phosphoenolpyruvate-dependent sugar phosphotransferase system (sugar PTS), a major carbohydrate active transport system, catalyzes the phosphorylation of incoming sugar substrates concomitantly with their translocation across the cell membrane. The enzyme II UlaABC PTS system is involved in ascorbate transport. This Shigella dysenteriae serotype 1 (strain Sd197) protein is Ascorbate-specific PTS system EIIA component (ulaC).